The following is a 1901-amino-acid chain: A-kinase anchor protein 11 (1901 aa).

Residues Ser18, Ser422, Ser433, Ser444, and Ser448 each carry the phosphoserine modification. The disordered stretch occupies residues 407 to 443 (ALPANVRKPTPRKPESPYGNLCDAPDSPRPVKASRED). 2 disordered regions span residues 843 to 864 (NPGNQNDFKPTNDDIEMQSSSK) and 971 to 993 (LPVSGEESQLTPEKSPKFPDSQN). 2 positions are modified to phosphothreonine: Thr981 and Thr1100. Residues 1131–1153 (EFAPATPPSTPHNSSVGSLSENE) are disordered. Polar residues predominate over residues 1141-1153 (PHNSSVGSLSENE). Phosphoserine occurs at positions 1171, 1176, 1177, 1242, and 1337. A Phosphothreonine modification is found at Thr1485. Ser1580 is subject to Phosphoserine. The segment at 1650-1663 (LAEKIVAEAIEKAE) is PKA-RII subunit binding domain. Positions 1708-1805 (KEIEDFQSTE…HEDEVEGLGQ (98 aa)) are disordered. Polar residues predominate over residues 1713–1740 (FQSTESVSSQQMNLSIGDDSTGSWSNLS). Basic and acidic residues predominate over residues 1747–1756 (DESSSFHHLS). Residues 1757 to 1772 (ESNGNSSSWSSLGLEG) show a composition bias toward low complexity. The span at 1787 to 1801 (DGPDDKDEEHEDEVE) shows a compositional bias: acidic residues.

The protein belongs to the AKAP110 family. In terms of tissue distribution, expressed in heart, brain, lung, liver, kidney, testis and ovary. Weakly expressed in skeletal muscle, pancreas and spleen.

Its subcellular location is the cytoplasm. The protein resides in the cytoskeleton. The protein localises to the microtubule organizing center. It is found in the centrosome. In terms of biological role, binds to type II regulatory subunits of protein kinase A and anchors/targets them. The chain is A-kinase anchor protein 11 (AKAP11) from Homo sapiens (Human).